The chain runs to 395 residues: Probable hercynylcysteine sulfoxide lyase (395 aa).

The disordered stretch occupies residues 1–21; the sequence is MQDEAMRRSGANSPAGDSLAD. N6-(pyridoxal phosphate)lysine is present on Lys220.

Belongs to the class-V pyridoxal-phosphate-dependent aminotransferase family. EgtE subfamily. Requires pyridoxal 5'-phosphate as cofactor.

It catalyses the reaction S-(hercyn-2-yl)-L-cysteine S-oxide + AH2 + H(+) = ergothioneine + pyruvate + A + NH4(+). Its pathway is amino-acid biosynthesis; ergothioneine biosynthesis. Its function is as follows. Probably catalyzes the conversion of hercynylcysteine sulfoxide to ergothioneine. ERG is one of the major redox buffers which protects bacteria against redox stressors and antibiotics; loss of ERG or mycothiol (MSH, the other major redox buffer in this bacteria) leads to respiratory alterations and bioenergetic deficiencies that negatively impact virulence. The chain is Probable hercynylcysteine sulfoxide lyase from Mycobacterium tuberculosis (strain CDC 1551 / Oshkosh).